A 539-amino-acid chain; its full sequence is Phosphoenolpyruvate carboxykinase (ATP) (539 aa).

Residues Arg64, Tyr206, and Lys212 each coordinate substrate. Residues Lys212, His231, and 247 to 255 (GLSGTGKTT) each bind ATP. Mn(2+)-binding residues include Lys212 and His231. Residue Asp268 participates in Mn(2+) binding. ATP is bound by residues Glu296, Arg332, 448-449 (RI), and Thr454. Substrate is bound at residue Arg332.

Belongs to the phosphoenolpyruvate carboxykinase (ATP) family. As to quaternary structure, monomer. Mn(2+) serves as cofactor.

It localises to the cytoplasm. It catalyses the reaction oxaloacetate + ATP = phosphoenolpyruvate + ADP + CO2. It participates in carbohydrate biosynthesis; gluconeogenesis. Its function is as follows. Involved in the gluconeogenesis. Catalyzes the conversion of oxaloacetate (OAA) to phosphoenolpyruvate (PEP) through direct phosphoryl transfer between the nucleoside triphosphate and OAA. The sequence is that of Phosphoenolpyruvate carboxykinase (ATP) from Salmonella arizonae (strain ATCC BAA-731 / CDC346-86 / RSK2980).